Here is a 509-residue protein sequence, read N- to C-terminus: ATP synthase subunit alpha (509 aa).

ATP is bound at residue 169–176 (GDRQTGKT).

Belongs to the ATPase alpha/beta chains family. As to quaternary structure, F-type ATPases have 2 components, CF(1) - the catalytic core - and CF(0) - the membrane proton channel. CF(1) has five subunits: alpha(3), beta(3), gamma(1), delta(1), epsilon(1). CF(0) has three main subunits: a(1), b(2) and c(9-12). The alpha and beta chains form an alternating ring which encloses part of the gamma chain. CF(1) is attached to CF(0) by a central stalk formed by the gamma and epsilon chains, while a peripheral stalk is formed by the delta and b chains.

It is found in the cell inner membrane. It carries out the reaction ATP + H2O + 4 H(+)(in) = ADP + phosphate + 5 H(+)(out). Produces ATP from ADP in the presence of a proton gradient across the membrane. The alpha chain is a regulatory subunit. In Xanthobacter autotrophicus (strain ATCC BAA-1158 / Py2), this protein is ATP synthase subunit alpha.